The following is a 265-amino-acid chain: Nitrogenase vanadium-iron protein alpha chain (265 aa).

Cys-17 and Cys-80 together coordinate [8Fe-7S] cluster. Cys-199 is a binding site for [7Fe-V-9S-C-homocitryl] cluster.

Belongs to the NifD/NifK/NifE/NifN family. As to quaternary structure, hexamer of two alpha, two beta, and two delta chains. [8Fe-7S] cluster serves as cofactor. Requires [7Fe-V-9S-C-homocitryl] cluster as cofactor.

The enzyme catalyses N2 + 8 reduced [2Fe-2S]-[ferredoxin] + 16 ATP + 16 H2O = H2 + 8 oxidized [2Fe-2S]-[ferredoxin] + 2 NH4(+) + 16 ADP + 16 phosphate + 6 H(+). In terms of biological role, this vanadium-iron protein is part of the nitrogenase complex that catalyzes the key enzymatic reactions in nitrogen fixation. The protein is Nitrogenase vanadium-iron protein alpha chain (vnfD) of Azorhizophilus paspali (Azotobacter paspali).